A 445-amino-acid polypeptide reads, in one-letter code: MANPVGAIRQRCAAIGEQLQGVDWLRVAVDFPLYVAERFRRDACLQNAATLSYTTLLALVPLLTIGLSIFAAFPVFSGLTEQMLDLLFENLVPASTAVVQQHLEDFVGRAAGLTVVGLLALMVSALLMMAAIDRAMNDIWRVQQRRRPLHGFMVYWTVLTLAPILMGASLGISSYVISVTRFGELEALSGLQGLLLAGMPFVAETVAFTFLYAAVPNFRVPLRHALLGGLLAAALFEAAKGGFGWYVANIPTYEAIYGALAALPIFLIWLYLSWVVVLVGAEFTQALASYSVARHRAAGTGRDAFRLAVRVLGHLWRAQREGRGLSTRALSRLEPAAGEMGVLQVLRPLRRARAIQLNGEGEWMLARDPSHYTLLDLYRSEAFPLPSVAALRKDGDDWDQRLADSLAQADTGLASGLAESLDDIFTSRPQIRPVVRQANSPSEER.

The next 6 membrane-spanning stretches (helical) occupy residues 56 to 76 (LLAL…FPVF), 112 to 132 (GLTV…MAAI), 152 to 172 (FMVY…SLGI), 195 to 215 (LLAG…YAAV), 225 to 245 (ALLG…GFGW), and 259 to 279 (ALAA…VVLV).

The protein belongs to the UPF0761 family.

Its subcellular location is the cell inner membrane. The chain is UPF0761 membrane protein Mlg_0521 from Alkalilimnicola ehrlichii (strain ATCC BAA-1101 / DSM 17681 / MLHE-1).